The following is a 400-amino-acid chain: Tryptophan synthase beta chain (400 aa).

At lysine 92 the chain carries N6-(pyridoxal phosphate)lysine.

The protein belongs to the TrpB family. As to quaternary structure, tetramer of two alpha and two beta chains. Requires pyridoxal 5'-phosphate as cofactor.

The enzyme catalyses (1S,2R)-1-C-(indol-3-yl)glycerol 3-phosphate + L-serine = D-glyceraldehyde 3-phosphate + L-tryptophan + H2O. It functions in the pathway amino-acid biosynthesis; L-tryptophan biosynthesis; L-tryptophan from chorismate: step 5/5. The beta subunit is responsible for the synthesis of L-tryptophan from indole and L-serine. The sequence is that of Tryptophan synthase beta chain from Leptospira borgpetersenii serovar Hardjo-bovis (strain JB197).